The sequence spans 224 residues: Heme response regulator HssR (224 aa).

The Response regulatory domain maps to 3–116 (QCLVVDDDSR…ELIFRIRAVL (114 aa)). 4-aspartylphosphate is present on Asp52. A DNA-binding region (ompR/PhoB-type) is located at residues 124–222 (NSEMTIGNLT…VRGQGYKVEN (99 aa)).

Phosphorylated by HssS.

It localises to the cytoplasm. Its function is as follows. Member of the two-component regulatory system HssS/HssR involved in intracellular heme homeostasis and tempering of staphylococcal virulence. Phosphorylated HssR binds to a direct repeat sequence within hrtAB promoter and activates the expression of hrtAB, an efflux pump, in response to extracellular heme, hemin, hemoglobin or blood. The sequence is that of Heme response regulator HssR (hssR) from Staphylococcus aureus (strain bovine RF122 / ET3-1).